The following is a 287-amino-acid chain: MAGAKEIRSKIASVQNTQKITKAMEMVAASKMRKTQDRMAASRPYAETMRKVIGHLALGNLEYKHPYLEERDIKRVGYLVVSTDRGLCGGLNINLFKKLLTEMKEWNQKGVDIDLALIGSKAVSFFGSVGGNVVAQVTGMGDNPSLSELIGPVKVMLQAYDEGRLDRLYVVSNKFINTMSQEPQVIQLLPLPKADDAELKRKSWDYLYEPDPKALLDTLLRRYVESQVYQGVVENLASEQAARMVAMKAATDNGGNLIKELQLVYNKARQASITQELTEIVSGAAAV.

The protein belongs to the ATPase gamma chain family. In terms of assembly, F-type ATPases have 2 components, CF(1) - the catalytic core - and CF(0) - the membrane proton channel. CF(1) has five subunits: alpha(3), beta(3), gamma(1), delta(1), epsilon(1). CF(0) has three main subunits: a, b and c.

The protein localises to the cell inner membrane. In terms of biological role, produces ATP from ADP in the presence of a proton gradient across the membrane. The gamma chain is believed to be important in regulating ATPase activity and the flow of protons through the CF(0) complex. The polypeptide is ATP synthase gamma chain (Edwardsiella ictaluri (strain 93-146)).